A 55-amino-acid polypeptide reads, in one-letter code: Large ribosomal subunit protein bL33A (55 aa).

Belongs to the bacterial ribosomal protein bL33 family.

The chain is Large ribosomal subunit protein bL33A from Mycobacterium sp. (strain KMS).